A 921-amino-acid polypeptide reads, in one-letter code: Protein translocase subunit SecA (921 aa).

ATP-binding positions include glutamine 87, 105–109, and aspartate 516; that span reads GEGKT. Positions 905, 907, 916, and 917 each coordinate Zn(2+).

This sequence belongs to the SecA family. In terms of assembly, monomer and homodimer. Part of the essential Sec protein translocation apparatus which comprises SecA, SecYEG and auxiliary proteins SecDF-YajC and YidC. The cofactor is Zn(2+).

The protein localises to the cell inner membrane. It localises to the cytoplasm. The enzyme catalyses ATP + H2O + cellular proteinSide 1 = ADP + phosphate + cellular proteinSide 2.. In terms of biological role, part of the Sec protein translocase complex. Interacts with the SecYEG preprotein conducting channel. Has a central role in coupling the hydrolysis of ATP to the transfer of proteins into and across the cell membrane, serving both as a receptor for the preprotein-SecB complex and as an ATP-driven molecular motor driving the stepwise translocation of polypeptide chains across the membrane. The protein is Protein translocase subunit SecA of Polaromonas sp. (strain JS666 / ATCC BAA-500).